Reading from the N-terminus, the 676-residue chain is DNA ligase (676 aa).

Residues 34–38 (DAEYD), 84–85 (SL), and E116 each bind NAD(+). The N6-AMP-lysine intermediate role is filled by K118. The NAD(+) site is built by R139, E174, K294, and K318. Residues C412, C415, C428, and C433 each contribute to the Zn(2+) site. The BRCT domain occupies 589-676 (KGGEALKGLT…RTGKKAEELV (88 aa)).

This sequence belongs to the NAD-dependent DNA ligase family. LigA subfamily. Requires Mg(2+) as cofactor. Mn(2+) serves as cofactor.

The enzyme catalyses NAD(+) + (deoxyribonucleotide)n-3'-hydroxyl + 5'-phospho-(deoxyribonucleotide)m = (deoxyribonucleotide)n+m + AMP + beta-nicotinamide D-nucleotide.. Functionally, DNA ligase that catalyzes the formation of phosphodiester linkages between 5'-phosphoryl and 3'-hydroxyl groups in double-stranded DNA using NAD as a coenzyme and as the energy source for the reaction. It is essential for DNA replication and repair of damaged DNA. The polypeptide is DNA ligase (Thermus thermophilus (strain ATCC 27634 / DSM 579 / HB8)).